A 128-amino-acid chain; its full sequence is Probable 4-amino-4-deoxy-L-arabinose-phosphoundecaprenol flippase subunit ArnF (128 aa).

Residues 1-2 (MG) lie on the Cytoplasmic side of the membrane. Residues 3–23 (LMWGLFSVIIASVAQLSLGFA) traverse the membrane as a helical segment. Residues 24–35 (ASHLPPMTHLWD) are Periplasmic-facing. The chain crosses the membrane as a helical span at residues 36-56 (FIAALLAFGLDARILLLGLLG). The Cytoplasmic segment spans residues 57–76 (YLLSVFCWYKTLHKLALSKA). The helical transmembrane segment at 77–97 (YALLSMSYVLVWIASMVLPGW) threads the bilayer. Residues 98-100 (EGT) lie on the Periplasmic side of the membrane. A helical transmembrane segment spans residues 101–121 (FSLKALLGVACIMSGLMLIFL). Over 122-128 (PMTKQRY) the chain is Cytoplasmic.

The protein belongs to the ArnF family. As to quaternary structure, heterodimer of ArnE and ArnF.

It localises to the cell inner membrane. It functions in the pathway bacterial outer membrane biogenesis; lipopolysaccharide biosynthesis. Translocates 4-amino-4-deoxy-L-arabinose-phosphoundecaprenol (alpha-L-Ara4N-phosphoundecaprenol) from the cytoplasmic to the periplasmic side of the inner membrane. The sequence is that of Probable 4-amino-4-deoxy-L-arabinose-phosphoundecaprenol flippase subunit ArnF from Escherichia coli (strain 55989 / EAEC).